A 104-amino-acid chain; its full sequence is Large ribosomal subunit protein uL24 (104 aa).

Belongs to the universal ribosomal protein uL24 family. As to quaternary structure, part of the 50S ribosomal subunit.

One of two assembly initiator proteins, it binds directly to the 5'-end of the 23S rRNA, where it nucleates assembly of the 50S subunit. Functionally, one of the proteins that surrounds the polypeptide exit tunnel on the outside of the subunit. This Clostridium perfringens (strain SM101 / Type A) protein is Large ribosomal subunit protein uL24.